Here is a 698-residue protein sequence, read N- to C-terminus: Polyribonucleotide nucleotidyltransferase (698 aa).

2 residues coordinate Mg(2+): Asp-490 and Asp-496. The KH domain occupies 558 to 617; the sequence is PVIYTMRIPQDKIGALIGPGGKNIKRITETTDTKIDINDDGVVQIAAVNGDKLAMAKAEI. Residues 627–695 form the S1 motif domain; that stretch reads NKIYKGKVVS…NNGKVRLSRK (69 aa).

This sequence belongs to the polyribonucleotide nucleotidyltransferase family. Mg(2+) serves as cofactor.

Its subcellular location is the cytoplasm. The catalysed reaction is RNA(n+1) + phosphate = RNA(n) + a ribonucleoside 5'-diphosphate. Functionally, involved in mRNA degradation. Catalyzes the phosphorolysis of single-stranded polyribonucleotides processively in the 3'- to 5'-direction. This is Polyribonucleotide nucleotidyltransferase from Elusimicrobium minutum (strain Pei191).